Consider the following 351-residue polypeptide: Glycerol-1-phosphate dehydrogenase [NAD(P)+] (351 aa).

Residues 97 to 101 (GKVID) and 119 to 122 (TSPS) contribute to the NAD(+) site. Residue aspartate 124 participates in substrate binding. Serine 128 contributes to the NAD(+) binding site. Residue aspartate 171 participates in substrate binding. 2 residues coordinate Zn(2+): aspartate 171 and histidine 251. A substrate-binding site is contributed by histidine 255. Residue histidine 267 coordinates Zn(2+).

Belongs to the glycerol-1-phosphate dehydrogenase family. As to quaternary structure, homodimer. The cofactor is Zn(2+).

It localises to the cytoplasm. It catalyses the reaction sn-glycerol 1-phosphate + NAD(+) = dihydroxyacetone phosphate + NADH + H(+). It carries out the reaction sn-glycerol 1-phosphate + NADP(+) = dihydroxyacetone phosphate + NADPH + H(+). It functions in the pathway membrane lipid metabolism; glycerophospholipid metabolism. Catalyzes the NAD(P)H-dependent reduction of dihydroxyacetonephosphate (DHAP or glycerone phosphate) to glycerol 1-phosphate (G1P). The G1P thus generated is used as the glycerophosphate backbone of phospholipids in the cellular membranes of Archaea. This chain is Glycerol-1-phosphate dehydrogenase [NAD(P)+], found in Saccharolobus islandicus (strain Y.N.15.51 / Yellowstone #2) (Sulfolobus islandicus).